The sequence spans 450 residues: UDP-N-acetylmuramoylalanine--D-glutamate ligase (450 aa).

119 to 125 (GSNGKTT) contacts ATP.

It belongs to the MurCDEF family.

The protein localises to the cytoplasm. The catalysed reaction is UDP-N-acetyl-alpha-D-muramoyl-L-alanine + D-glutamate + ATP = UDP-N-acetyl-alpha-D-muramoyl-L-alanyl-D-glutamate + ADP + phosphate + H(+). It functions in the pathway cell wall biogenesis; peptidoglycan biosynthesis. Functionally, cell wall formation. Catalyzes the addition of glutamate to the nucleotide precursor UDP-N-acetylmuramoyl-L-alanine (UMA). In Streptococcus pneumoniae serotype 19F (strain G54), this protein is UDP-N-acetylmuramoylalanine--D-glutamate ligase.